The primary structure comprises 314 residues: Ribonuclease Z (314 aa).

The Zn(2+) site is built by His-62, His-64, Asp-66, His-67, His-139, Asp-210, and His-268. Asp-66 serves as the catalytic Proton acceptor.

It belongs to the RNase Z family. Homodimer. Requires Zn(2+) as cofactor.

The enzyme catalyses Endonucleolytic cleavage of RNA, removing extra 3' nucleotides from tRNA precursor, generating 3' termini of tRNAs. A 3'-hydroxy group is left at the tRNA terminus and a 5'-phosphoryl group is left at the trailer molecule.. Its function is as follows. Zinc phosphodiesterase, which displays some tRNA 3'-processing endonuclease activity. Probably involved in tRNA maturation, by removing a 3'-trailer from precursor tRNA. This chain is Ribonuclease Z, found in Acaryochloris marina (strain MBIC 11017).